Here is a 700-residue protein sequence, read N- to C-terminus: Protein UL29/28 (700 aa).

Residues Met1 to Ala30 form a disordered region. Over residues Ser9–Pro21 the composition is skewed to low complexity.

Belongs to the herpesviridae US22 family. As to quaternary structure, interacts with UL38 and host HDAC1; these interactions are necessary for the HDAC1 interaction with UL38. Interacts with host MTA2.

It is found in the virion. The protein resides in the host nucleus. Its subcellular location is the host cytoplasm. In terms of biological role, contributes to activation of immediate-early gene expression. In Human cytomegalovirus (strain Merlin) (HHV-5), this protein is Protein UL29/28 (UL29).